A 411-amino-acid polypeptide reads, in one-letter code: Glucose-1-phosphate adenylyltransferase (411 aa).

Residues Gly-162, 177–178 (EK), and Ser-195 contribute to the alpha-D-glucose 1-phosphate site.

It belongs to the bacterial/plant glucose-1-phosphate adenylyltransferase family. In terms of assembly, homotetramer.

It carries out the reaction alpha-D-glucose 1-phosphate + ATP + H(+) = ADP-alpha-D-glucose + diphosphate. The protein operates within glycan biosynthesis; glycogen biosynthesis. Its function is as follows. Involved in the biosynthesis of ADP-glucose, a building block required for the elongation reactions to produce glycogen. Catalyzes the reaction between ATP and alpha-D-glucose 1-phosphate (G1P) to produce pyrophosphate and ADP-Glc. This Thermodesulfovibrio yellowstonii (strain ATCC 51303 / DSM 11347 / YP87) protein is Glucose-1-phosphate adenylyltransferase.